The sequence spans 99 residues: DNA-directed RNA polymerase subunit omega (99 aa).

Belongs to the RNA polymerase subunit omega family. In terms of assembly, the RNAP catalytic core consists of 2 alpha, 1 beta, 1 beta' and 1 omega subunit. When a sigma factor is associated with the core the holoenzyme is formed, which can initiate transcription.

It carries out the reaction RNA(n) + a ribonucleoside 5'-triphosphate = RNA(n+1) + diphosphate. Functionally, promotes RNA polymerase assembly. Latches the N- and C-terminal regions of the beta' subunit thereby facilitating its interaction with the beta and alpha subunits. This is DNA-directed RNA polymerase subunit omega from Thermus thermophilus (strain ATCC BAA-163 / DSM 7039 / HB27).